A 313-amino-acid chain; its full sequence is Aspartate carbamoyltransferase catalytic subunit (313 aa).

Carbamoyl phosphate is bound by residues Arg-51 and Thr-52. An L-aspartate-binding site is contributed by Lys-80. Carbamoyl phosphate is bound by residues Arg-101, His-129, and Gln-132. Residues Arg-162 and Arg-224 each coordinate L-aspartate. Positions 263 and 264 each coordinate carbamoyl phosphate.

The protein belongs to the aspartate/ornithine carbamoyltransferase superfamily. ATCase family. Heterododecamer (2C3:3R2) of six catalytic PyrB chains organized as two trimers (C3), and six regulatory PyrI chains organized as three dimers (R2).

The enzyme catalyses carbamoyl phosphate + L-aspartate = N-carbamoyl-L-aspartate + phosphate + H(+). The protein operates within pyrimidine metabolism; UMP biosynthesis via de novo pathway; (S)-dihydroorotate from bicarbonate: step 2/3. Functionally, catalyzes the condensation of carbamoyl phosphate and aspartate to form carbamoyl aspartate and inorganic phosphate, the committed step in the de novo pyrimidine nucleotide biosynthesis pathway. The sequence is that of Aspartate carbamoyltransferase catalytic subunit from Bacteroides thetaiotaomicron (strain ATCC 29148 / DSM 2079 / JCM 5827 / CCUG 10774 / NCTC 10582 / VPI-5482 / E50).